Reading from the N-terminus, the 586-residue chain is Glutathione S-transferase C-terminal domain-containing protein homolog (586 aa).

Residues 121-276 (LGFKESCLLA…GTCAKILGDL (156 aa)) form the GST C-terminal domain.

The protein belongs to the GSTCD family.

The sequence is that of Glutathione S-transferase C-terminal domain-containing protein homolog from Drosophila pseudoobscura pseudoobscura (Fruit fly).